Reading from the N-terminus, the 310-residue chain is Pyrimidine-specific ribonucleoside hydrolase RihA (310 aa).

H240 is a catalytic residue.

It belongs to the IUNH family. RihA subfamily.

Functionally, hydrolyzes cytidine or uridine to ribose and cytosine or uracil, respectively. The protein is Pyrimidine-specific ribonucleoside hydrolase RihA of Photobacterium profundum (strain SS9).